The sequence spans 82 residues: MNEFQTESFVSLKPYDLVKVNRGAYVGSLEARASDPIPPAYIFEGPGTLITTAGQYSLVRWHLIPAPDVWLATAQLEAYSED.

Belongs to the complex I NdhO subunit family. In terms of assembly, NDH-1 can be composed of about 15 different subunits; different subcomplexes with different compositions have been identified which probably have different functions.

Its subcellular location is the plastid. It localises to the organellar chromatophore thylakoid membrane. The enzyme catalyses a plastoquinone + NADH + (n+1) H(+)(in) = a plastoquinol + NAD(+) + n H(+)(out). It carries out the reaction a plastoquinone + NADPH + (n+1) H(+)(in) = a plastoquinol + NADP(+) + n H(+)(out). Its function is as follows. NDH-1 shuttles electrons from an unknown electron donor, via FMN and iron-sulfur (Fe-S) centers, to quinones in the respiratory and/or the photosynthetic chain. The immediate electron acceptor for the enzyme in this species is believed to be plastoquinone. Couples the redox reaction to proton translocation, and thus conserves the redox energy in a proton gradient. Cyanobacterial NDH-1 also plays a role in inorganic carbon-concentration. The sequence is that of NAD(P)H-quinone oxidoreductase subunit O, organellar chromatophore from Paulinella chromatophora.